Reading from the N-terminus, the 218-residue chain is uncharacterized protein (218 aa).

5 helical membrane passes run 28–48 (ILLF…LSGL), 66–86 (FDIG…WKPL), 92–112 (LGTL…TKIL), 122–142 (MIFC…YLTC), and 173–193 (ISVC…TVLF).

It localises to the cell membrane. This is an uncharacterized protein from Haemophilus influenzae (strain ATCC 51907 / DSM 11121 / KW20 / Rd).